Consider the following 250-residue polypeptide: 3-deoxy-manno-octulosonate cytidylyltransferase (250 aa).

Belongs to the KdsB family.

It localises to the cytoplasm. The catalysed reaction is 3-deoxy-alpha-D-manno-oct-2-ulosonate + CTP = CMP-3-deoxy-beta-D-manno-octulosonate + diphosphate. The protein operates within nucleotide-sugar biosynthesis; CMP-3-deoxy-D-manno-octulosonate biosynthesis; CMP-3-deoxy-D-manno-octulosonate from 3-deoxy-D-manno-octulosonate and CTP: step 1/1. Its pathway is bacterial outer membrane biogenesis; lipopolysaccharide biosynthesis. In terms of biological role, activates KDO (a required 8-carbon sugar) for incorporation into bacterial lipopolysaccharide in Gram-negative bacteria. The protein is 3-deoxy-manno-octulosonate cytidylyltransferase of Syntrophotalea carbinolica (strain DSM 2380 / NBRC 103641 / GraBd1) (Pelobacter carbinolicus).